Here is a 1848-residue protein sequence, read N- to C-terminus: MAGVWQHPFVNVFKHLRLEEWKKSSKEGDVTSVMDKTLKCTVYRIRGSIPAGNYIQLPKTSSQSLGLTGRYLYILFKPLPGKHFVVHIDVSAEDGQTVRISFSNLFKEFKSTATWLQFPFVCGAIKGSVYDSTAQGARQGMVGPAPSGSRWTCLLLDVQYILSLYLSRRYSHLRSAKLCSNLLVRNLMTSDLLFNPEVNFMEARHAKTLPDGISPMPREMSFPVPKGEKWHDLYDFIMFPSDSSKLPYDSIQKGQSMVTAPGAPMSRSPARERPRSVTISKPVQDRVSLIQQITTPRPMPHRSLLRVESVPERPVSVSARAEEARDLEDRSRGVEQDGGVHVYAHKTNKLSIHRHKSDSEQVICTKVDRPETLSVPPECKKLLPDPIFNLRRIIGFGGCTECFALWTHTGCSVVYPCHAIIVVLEVKTGEQRFLLGHTDKVSALAFNGSCTLLASAQTGSLSMVRLWHFQKGSCLAMFKTHVHSVSYLSFSHSGTVLCGVGKDGHGKTMVVVWNTSQASRSGEVAVLAKAHTDIDIQTMKIAFFDDTRMVSCGKDNVRLWRVRGGTLRSCPVNLGEYHMLEFSDLAFEAGHRPEKEAEDRTLYVSSRSGHILEIDYKNVVLRNVRRVQPGQQQHSERRDKQTFSSGPGIAINSLSVSATFCATGTEDGYLRLWPLDFSGVFLEAEHEGPVSCVAISPEGLRVLSCTSSGELGVLDVPSRGYNTLMRSHTDTLLSFSCHPTHPQLVTVSSDNTIRIWDTGTLQQLYDFTAEEETPCAVTFHPVRQAFACGFSSGTIRFFDITATALQAEHKQHRGAITGLLFSPDGSLMYSCCSLGSVALYSIGHKEQHVLRVLGNVVCKDSERGPMALSLSSDGRLLAFVGPTEYTVTVMDARSLDELLRVDVSILDLDSTTLDCALGLAFSPLKPHHLLVSTSGNKILWLDPKTGRLTREVTQVHKQCCSSLAVSMDTRYMLTAGDRLLKVWDQRQPGTVRPQVFIGHSEAVQQVDFSPDQQSVISAGDAVFIWDFLAAPDPEFTKTDCVPALPFALHSSAALDPSSEHRRDSTFISSGMPRGTAPRPCISSPPRLDISPVQGMDHPDLFSESDDGQEEEGNRDEQERTLVPDTRDNLVESDEQSSVVIIECQPNRAKLLTGSKSNSSSLREGMVKSTHEPPRPDSYTHFHTRFKASCLAKGMCHPPEGQEMLTLRALIGYNGNGRANMAWNPDTGFFSYTCGCVIVVEDLHSGSQRHWLGHPEEISTLALTNDALVLASASGSGDGSSLCQIRIWDTQDGSCMKILTHHRTEVQAMSYSRDDRLFVSIGDYRDGNLALWSTKGYELLATSRLFQPVHAVTFNPAHFDDFASAGPGAVSFWRIETQGTDTQIKVYRVAVPEEVGTAAELTSITYNSTSLLYSGCSTGQVCVWDCQTHRCFLTWEADQGEIGILLCRGNRLLTGSNTRRIRLWCVAAVQELREKGSGASSTSVLMEHEMTLDGAIVSATFDDALEMGIVGTTAGTLWYINWVENTSIRLISGHRNKVMDLAVAHGESHCATCGEDGSLRIWSLQSCELLLQFQVLNQSCLCLAWSPQPKSGPSTEDQRIAAGYSDGTIRIFSVSKTEMEMKIHPHPCAVTSIAYSTSGDVLLTGGKDGQMAITSPRTGMTIRVLSDHKGSPITTIECTGRKLTGLPTDGELWLAASTDRRVSIWASDWSKDKCELLDWLSFPAPTSQKDLDVSVPTLAAFCPWQPGTVVYSGFGVEKEILFYSLIQKQVLLRIPLSHFATSLTLSPAASLIAVGSNERLLRLIDTSAGTKQDFAAYDDGVHLCRVSPSGNLLLTASYNQVLVWDIQNS.

The tract at residues Met1 to Phe222 is binds with microtubules. Disordered regions lie at residues Met257–Thr278 and Ser316–Gln336. Positions Arg320–Glu335 are enriched in basic and acidic residues. WD repeat units follow at residues Gly436 to Lys479, His481 to Glu523, Ala530 to Cys570, Ser644 to Glu683, Glu685 to Leu724, Ser727 to Asp766, Ala769 to Glu808, Gln811 to Leu850, Val955 to Pro993, and Gly998 to Phe1035. 2 disordered regions span residues Ala1053–Asp1133 and Leu1151–Tyr1178. Residues Ser1102–Asn1113 are compositionally biased toward acidic residues. 2 stretches are compositionally biased toward basic and acidic residues: residues Arg1114–Leu1129 and Gly1164–Tyr1178. WD repeat units lie at residues Gly1252–Ile1297, His1300–Thr1341, Arg1343–Gln1382, Gly1395–Thr1433, Glu1435–Glu1473, Gly1532–Gln1571, Val1574–Lys1621, Pro1624–Val1663, Ser1670–Glu1714, Pro1774–Phe1813, and Ala1815–Ser1848.

Belongs to the WD repeat WDR90/POC16 family.

It localises to the cytoplasm. Its subcellular location is the cytoskeleton. It is found in the microtubule organizing center. The protein localises to the centrosome. The protein resides in the centriole. It localises to the centriolar satellite. Microtubule-binding protein that plays a crucial role in ensuring inner core protein localization within the centriole core, as well as in maintaining the microtubule wall integrity and the overall centriole roundness and stability. Required for efficient primary cilium formation. The sequence is that of WD repeat-containing protein 90 (wdr90) from Xenopus tropicalis (Western clawed frog).